A 191-amino-acid polypeptide reads, in one-letter code: Gastrokine-3 (191 aa).

An N-terminal signal peptide occupies residues 1–30 (MPLHSLERDNMRRLIAPSILVTVFLVPALA). An N-linked (GlcNAc...) asparagine glycan is attached at asparagine 33. The region spanning 63–155 (NSVQSEWDGV…LCRAVPTYFA (93 aa)) is the BRICHOS domain. Cysteine 90 and cysteine 147 are oxidised to a cystine.

The protein belongs to the gastrokine family. In terms of tissue distribution, expressed in stomach. Present in mucus cells at the base of antral glands, and Brunner glands of the duodenum. Present at lower levels in the mucus neck cell region of the fundus (at protein level).

Its subcellular location is the secreted. Functionally, inhibits gastric epithelial cell proliferation. This Mus musculus (Mouse) protein is Gastrokine-3 (Gkn3).